We begin with the raw amino-acid sequence, 1007 residues long: MGASVLPLGLGAGDCQSSSGRRMSACLPRTALSFLLSLLLATPGARAAGYETCPMVQPGMLNVHLVAHTHDDVGWLKTVDQYYWGIHNDLQQAGVQYILDSVISALLAEPTRRFVYVEMAFFSRWWHQQTNETQEVVRRLVRQGRLEFANGGWVMNDEAATHYGAIVDQMTLGLRFLEDTFGSDGRPRVAWHIDPFGHSREQASLFAQMGFDGVFFGRIDYQDKLVRKKRREMELVWRASASLKAPAADLFTGVLPNNYGPPEGLCWDVLCADPPVVDDPRSPEYNAKKLVSYFLQLATAQGRYYRTNHTVMTMGSDFQYENANTWFKNLDKLIQLVNMQQANGSRVHVLYSTPACYLWELNKANLTWPVKEDDFFPYADGPHMFWTGYFSSRPALKRYERLSYNFLQVCNQLEAQVGPAANVGPYGHGDSSPLNQAMAVLQHHDAVSGTSKQHVADDYARQLAAGWGPCEVLLSNALAKLSGSKETFLFCRDLNISICPFSQTSERFQVLVYNPLGRKVDRMVRLPVRKGLFLIKDPGNNTVPSTVVELTSSGNPELLFPALVPALGFSVYSVTRVSDQNPQTRSQHSRPQKYSSPVLSIKNEYLRASFHPDTGLLSMIEVLDRKLTLPVNQAFFWYNASVGDKRSSQASGAYIFRPSQQWPFPVSHLARTRLVKTALVQEVHQNFTAWCSQVVRLYSGQRHLELEWTVGPIPVGDKWGKEIISRFDTPLETGGVFFTDSNGREVLERRRDYRPSWKLNQTEPVAGNYYPVNSRIYITDGKMQLTVLTDRSQGGSSMSDGSLELMVHRRLLKDDGRGVGEALQEPGSGGWVRGRHLLLLDTAREAAAEHRLLAEKELLAPQLVLAPGQGPSYHHDHHEAVPRKQFSGLRRQLPPSVRLLTLARWGPDTLLLRLEHQFALGEDSSRNLSLPVTLDLQDLFSTFTITRLQETTLAANQLRASASRLKWTTEIDPISRPAVPRLDPSSITLQPMEIRTFVASVQWEENS.

The first 47 residues, 1-47, serve as a signal peptide directing secretion; sequence MGASVLPLGLGAGDCQSSSGRRMSACLPRTALSFLLSLLLATPGARA. 2 cysteine pairs are disulfide-bonded: C53–C356 and C266–C271. The Zn(2+) site is built by H70 and D72. N-linked (GlcNAc...) asparagine glycosylation occurs at N131. Position 194 (D194) interacts with Zn(2+). Residue D194 is the Nucleophile of the active site. N-linked (GlcNAc...) asparagine glycosylation is found at N308, N343, and N365. 2 disulfide bridges follow: C410-C470 and C491-C499. A Zn(2+)-binding site is contributed by H444. Residues N495, N540, N639, N686, N760, and N927 are each glycosylated (N-linked (GlcNAc...) asparagine).

Belongs to the glycosyl hydrolase 38 family. Requires Zn(2+) as cofactor.

The protein resides in the lysosome. It catalyses the reaction Hydrolysis of terminal, non-reducing alpha-D-mannose residues in alpha-D-mannosides.. Functionally, necessary for the catabolism of N-linked carbohydrates released during glycoprotein turnover. This is Lysosomal alpha-mannosidase (MAN2B1) from Cavia porcellus (Guinea pig).